The following is a 1206-amino-acid chain: DNA-directed RNA polymerase subunit beta' (1206 aa).

Residues Cys-60, Cys-62, Cys-75, and Cys-78 each contribute to the Zn(2+) site. Residues Asp-449, Asp-451, and Asp-453 each coordinate Mg(2+). 4 residues coordinate Zn(2+): Cys-818, Cys-892, Cys-899, and Cys-902.

It belongs to the RNA polymerase beta' chain family. The RNAP catalytic core consists of 2 alpha, 1 beta, 1 beta' and 1 omega subunit. When a sigma factor is associated with the core the holoenzyme is formed, which can initiate transcription. It depends on Mg(2+) as a cofactor. The cofactor is Zn(2+).

It carries out the reaction RNA(n) + a ribonucleoside 5'-triphosphate = RNA(n+1) + diphosphate. In terms of biological role, DNA-dependent RNA polymerase catalyzes the transcription of DNA into RNA using the four ribonucleoside triphosphates as substrates. This Shouchella clausii (strain KSM-K16) (Alkalihalobacillus clausii) protein is DNA-directed RNA polymerase subunit beta'.